Here is a 550-residue protein sequence, read N- to C-terminus: Probable asparagine synthetase [glutamine-hydrolyzing] (550 aa).

Cys-2 functions as the For GATase activity in the catalytic mechanism. Residues 2-189 (CGIICFIQYG…PNQYVTIDLS (188 aa)) form the Glutamine amidotransferase type-2 domain. L-glutamine-binding positions include 53 to 57 (RLAIM), 78 to 80 (NGE), and Asp-100. Residues 213-530 (YYQSHKSLID…GGRDHIIPHY (318 aa)) form the Asparagine synthetase domain. ATP-binding positions include Leu-256, Val-284, and 360 to 361 (SG).

The catalysed reaction is L-aspartate + L-glutamine + ATP + H2O = L-asparagine + L-glutamate + AMP + diphosphate + H(+). The protein operates within amino-acid biosynthesis; L-asparagine biosynthesis; L-asparagine from L-aspartate (L-Gln route): step 1/1. This is Probable asparagine synthetase [glutamine-hydrolyzing] from Acanthamoeba polyphaga mimivirus (APMV).